Here is a 67-residue protein sequence, read N- to C-terminus: Toxin Cex8 (67 aa).

Ala-1 is a signal peptide. Positions 2-65 constitute an LCN-type CS-alpha/beta domain; it reads KEGYLVNIYT…SYPYPEKSCG (64 aa). Cystine bridges form between Cys-13/Cys-64, Cys-17/Cys-40, Cys-26/Cys-45, and Cys-30/Cys-47. The residue at position 64 (Cys-64) is a Cysteine amide. Positions 65–67 are excised as a propeptide; the sequence is GRK.

It belongs to the long (4 C-C) scorpion toxin superfamily. Sodium channel inhibitor family. Beta subfamily. In terms of tissue distribution, expressed by the venom gland.

The protein localises to the secreted. Its function is as follows. Beta toxins bind voltage-independently at site-4 of sodium channels (Nav) and shift the voltage of activation toward more negative potentials thereby affecting sodium channel activation and promoting spontaneous and repetitive firing. The protein is Toxin Cex8 of Centruroides exilicauda (Bark scorpion).